Consider the following 161-residue polypeptide: Early E3 17.7 kDa glycoprotein (161 aa).

Residues asparagine 14 and asparagine 87 are each glycosylated (N-linked (GlcNAc...) asparagine; by host). Residues 102-129 (IINPAIFLFLHVLTLVIVLAMAAEVIYN) traverse the membrane as a helical segment.

It is found in the host membrane. The protein is Early E3 17.7 kDa glycoprotein of Murine adenovirus A serotype 1 (MAdV-1).